The sequence spans 303 residues: Acetylglutamate kinase (303 aa).

Substrate is bound by residues 76 to 77, arginine 98, and asparagine 199; that span reads GG.

The protein belongs to the acetylglutamate kinase family. ArgB subfamily.

The protein localises to the cytoplasm. It catalyses the reaction N-acetyl-L-glutamate + ATP = N-acetyl-L-glutamyl 5-phosphate + ADP. Its pathway is amino-acid biosynthesis; L-arginine biosynthesis; N(2)-acetyl-L-ornithine from L-glutamate: step 2/4. Its function is as follows. Catalyzes the ATP-dependent phosphorylation of N-acetyl-L-glutamate. This is Acetylglutamate kinase from Clavibacter michiganensis subsp. michiganensis (strain NCPPB 382).